Reading from the N-terminus, the 165-residue chain is Crossover junction endodeoxyribonuclease RuvC (165 aa).

Residues Asp-7, Glu-67, and Asp-140 contribute to the active site. Mg(2+) contacts are provided by Asp-7, Glu-67, and Asp-140.

This sequence belongs to the RuvC family. Homodimer which binds Holliday junction (HJ) DNA. The HJ becomes 2-fold symmetrical on binding to RuvC with unstacked arms; it has a different conformation from HJ DNA in complex with RuvA. In the full resolvosome a probable DNA-RuvA(4)-RuvB(12)-RuvC(2) complex forms which resolves the HJ. Mg(2+) is required as a cofactor.

It localises to the cytoplasm. The enzyme catalyses Endonucleolytic cleavage at a junction such as a reciprocal single-stranded crossover between two homologous DNA duplexes (Holliday junction).. In terms of biological role, the RuvA-RuvB-RuvC complex processes Holliday junction (HJ) DNA during genetic recombination and DNA repair. Endonuclease that resolves HJ intermediates. Cleaves cruciform DNA by making single-stranded nicks across the HJ at symmetrical positions within the homologous arms, yielding a 5'-phosphate and a 3'-hydroxyl group; requires a central core of homology in the junction. The consensus cleavage sequence is 5'-(A/T)TT(C/G)-3'. Cleavage occurs on the 3'-side of the TT dinucleotide at the point of strand exchange. HJ branch migration catalyzed by RuvA-RuvB allows RuvC to scan DNA until it finds its consensus sequence, where it cleaves and resolves the cruciform DNA. In Dehalococcoides mccartyi (strain ATCC BAA-2266 / KCTC 15142 / 195) (Dehalococcoides ethenogenes (strain 195)), this protein is Crossover junction endodeoxyribonuclease RuvC.